We begin with the raw amino-acid sequence, 392 residues long: 8-amino-7-oxononanoate synthase (392 aa).

Residue arginine 19 coordinates substrate. Position 106 to 107 (106 to 107 (GY)) interacts with pyridoxal 5'-phosphate. Histidine 131 is a binding site for substrate. Positions 176, 204, and 233 each coordinate pyridoxal 5'-phosphate. The residue at position 236 (lysine 236) is an N6-(pyridoxal phosphate)lysine. Threonine 350 provides a ligand contact to substrate.

This sequence belongs to the class-II pyridoxal-phosphate-dependent aminotransferase family. BioF subfamily. Homodimer. Requires pyridoxal 5'-phosphate as cofactor.

It carries out the reaction 6-carboxyhexanoyl-[ACP] + L-alanine + H(+) = (8S)-8-amino-7-oxononanoate + holo-[ACP] + CO2. It participates in cofactor biosynthesis; biotin biosynthesis. In terms of biological role, catalyzes the decarboxylative condensation of pimeloyl-[acyl-carrier protein] and L-alanine to produce 8-amino-7-oxononanoate (AON), [acyl-carrier protein], and carbon dioxide. The sequence is that of 8-amino-7-oxononanoate synthase from Pseudomonas fluorescens (strain ATCC BAA-477 / NRRL B-23932 / Pf-5).